A 386-amino-acid chain; its full sequence is MGDDGFLDQYPANTDAGIGTVHSCRYSKQKNPVQNNDFLSCSMCIHNGPIKLYGIFSGFNGGDSTAKFVMNRLVYEIFGENPITPTLLPYQVVEEFKRKFENVAERYLLMNTDDLNNRLLKLEEQSETGNNAVSEINQKIRQGTTAIVVMIINQDLYVLNCGNSLAIAMNSENVVQLNSNLHNNDNPLEIVRIKGLGINPETVLNPTRAIGDLQRTHLFEETEAFKNAKGPPVISTPDVQYTKIDPSWRHLVLISDGVVQNLKEVEVENIPTEVSVRLIEDHTVTSTAQALVDSFARKHRDAYTMSDDKNFCISNHREEMTVIYVKLEEDYQAALYEQFDSAISTMESTNATLYEPCSTPYVDATNFNSGKNYEKMKKLLLTRPSK.

The region spanning 22 to 327 (HSCRYSKQKN…EEMTVIYVKL (306 aa)) is the PPM-type phosphatase domain.

As to quaternary structure, interacts with mom-4; the interaction enhances mom-4 kinase activity.

In terms of biological role, involved in the Wnt signaling pathway by regulating mom-4 kinase activity. The sequence is that of TGF-beta-activated kinase 1 and MAP3K7-binding protein 1 from Caenorhabditis elegans.